Reading from the N-terminus, the 259-residue chain is Early E4 30 kDa protein (259 aa).

It belongs to the adenoviridae E4 30 to 34 kDa protein family. Interacts with E1B-55k.

Its subcellular location is the host nucleus. It localises to the host cytoplasm. Plays a major role to prevent cellular inhibition of viral genome replication by nuclear bodies. Assembles an SCF-like E3 ubiquitin ligase complex based on the cellular proteins ELOB, ELOC, CUL5 and RBX1, in cooperation with viral E1B-55K. This viral RING-type ligase ubiquitinates cellular substrates prior to proteasomal degradation: p53/TP53, LIG4, MRE11-RAD50-NBS1 (MRN) complex, ITGA3, DAXX and BLM. This chain is Early E4 30 kDa protein, found in Canine adenovirus serotype 2 (strain Toronto A 26-61) (CAdV-2).